A 397-amino-acid chain; its full sequence is Succinyl-diaminopimelate desuccinylase (397 aa).

A Zn(2+)-binding site is contributed by His73. Residue Asp75 is part of the active site. Asp106 contributes to the Zn(2+) binding site. Glu140 acts as the Proton acceptor in catalysis. Residues Glu141, Glu169, and His366 each contribute to the Zn(2+) site.

Belongs to the peptidase M20A family. DapE subfamily. Homodimer. Requires Zn(2+) as cofactor. Co(2+) is required as a cofactor.

The catalysed reaction is N-succinyl-(2S,6S)-2,6-diaminopimelate + H2O = (2S,6S)-2,6-diaminopimelate + succinate. It functions in the pathway amino-acid biosynthesis; L-lysine biosynthesis via DAP pathway; LL-2,6-diaminopimelate from (S)-tetrahydrodipicolinate (succinylase route): step 3/3. In terms of biological role, catalyzes the hydrolysis of N-succinyl-L,L-diaminopimelic acid (SDAP), forming succinate and LL-2,6-diaminopimelate (DAP), an intermediate involved in the bacterial biosynthesis of lysine and meso-diaminopimelic acid, an essential component of bacterial cell walls. The sequence is that of Succinyl-diaminopimelate desuccinylase from Sinorhizobium medicae (strain WSM419) (Ensifer medicae).